The primary structure comprises 604 residues: Phenylalanine--tRNA ligase beta subunit (604 aa).

In terms of domain architecture, B5 spans 327-402 (YFQEKREVAH…LGRTLDRFSP (76 aa)). Mg(2+)-binding residues include D380, D386, E389, and E390.

It belongs to the phenylalanyl-tRNA synthetase beta subunit family. Type 2 subfamily. As to quaternary structure, tetramer of two alpha and two beta subunits. Requires Mg(2+) as cofactor.

It is found in the cytoplasm. It catalyses the reaction tRNA(Phe) + L-phenylalanine + ATP = L-phenylalanyl-tRNA(Phe) + AMP + diphosphate + H(+). The protein is Phenylalanine--tRNA ligase beta subunit of Treponema pallidum subsp. pallidum (strain SS14).